A 721-amino-acid chain; its full sequence is Polyribonucleotide nucleotidyltransferase (721 aa).

Mg(2+) contacts are provided by Asp-495 and Asp-501. One can recognise a KH domain in the interval Pro-562–Ile-621. One can recognise an S1 motif domain in the interval Gly-631–Lys-699. Positions Lys-699 to Lys-721 are disordered.

The protein belongs to the polyribonucleotide nucleotidyltransferase family. Requires Mg(2+) as cofactor.

It localises to the cytoplasm. It catalyses the reaction RNA(n+1) + phosphate = RNA(n) + a ribonucleoside 5'-diphosphate. Functionally, involved in mRNA degradation. Catalyzes the phosphorolysis of single-stranded polyribonucleotides processively in the 3'- to 5'-direction. This is Polyribonucleotide nucleotidyltransferase from Anaeromyxobacter dehalogenans (strain 2CP-C).